A 193-amino-acid chain; its full sequence is dTTP/UTP pyrophosphatase (193 aa).

D68 serves as the catalytic Proton acceptor.

This sequence belongs to the Maf family. YhdE subfamily. A divalent metal cation is required as a cofactor.

Its subcellular location is the cytoplasm. The catalysed reaction is dTTP + H2O = dTMP + diphosphate + H(+). It catalyses the reaction UTP + H2O = UMP + diphosphate + H(+). Its function is as follows. Nucleoside triphosphate pyrophosphatase that hydrolyzes dTTP and UTP. May have a dual role in cell division arrest and in preventing the incorporation of modified nucleotides into cellular nucleic acids. In Ruegeria sp. (strain TM1040) (Silicibacter sp.), this protein is dTTP/UTP pyrophosphatase.